Here is a 618-residue protein sequence, read N- to C-terminus: Isocitrate dehydrogenase kinase/phosphatase (618 aa).

ATP is bound by residues 332–338 and Lys-353; that span reads APGIKGM. Asp-388 is an active-site residue.

It belongs to the AceK family.

The protein localises to the cytoplasm. The catalysed reaction is L-seryl-[isocitrate dehydrogenase] + ATP = O-phospho-L-seryl-[isocitrate dehydrogenase] + ADP + H(+). Its function is as follows. Bifunctional enzyme which can phosphorylate or dephosphorylate isocitrate dehydrogenase (IDH) on a specific serine residue. This is a regulatory mechanism which enables bacteria to bypass the Krebs cycle via the glyoxylate shunt in response to the source of carbon. When bacteria are grown on glucose, IDH is fully active and unphosphorylated, but when grown on acetate or ethanol, the activity of IDH declines drastically concomitant with its phosphorylation. In Methylibium petroleiphilum (strain ATCC BAA-1232 / LMG 22953 / PM1), this protein is Isocitrate dehydrogenase kinase/phosphatase.